A 290-amino-acid polypeptide reads, in one-letter code: Probable 2-(5''-triphosphoribosyl)-3'-dephosphocoenzyme-A synthase (290 aa).

This sequence belongs to the CitG/MdcB family.

The enzyme catalyses 3'-dephospho-CoA + ATP = 2'-(5''-triphospho-alpha-D-ribosyl)-3'-dephospho-CoA + adenine. In terms of biological role, involved in the formation of 2-(5''-phosphoribosyl)-3'-dephosphocoenzyme-A, the prosthetic group of the acyl-carrier protein of the malonate decarboxylase. This is Probable 2-(5''-triphosphoribosyl)-3'-dephosphocoenzyme-A synthase from Pseudomonas fluorescens (strain Pf0-1).